The following is a 101-amino-acid chain: Protein Tat (101 aa).

Residues 1 to 24 (MEPVDPRLEPWKHPGSQPKTACTN) form an interaction with human CREBBP region. Positions 1–48 (MEPVDPRLEPWKHPGSQPKTACTNCYCKKCCFHCQVCFITKGLGISYG) are transactivation. Zn(2+) is bound by residues C22, C25, and C27. The interval 22–37 (CTNCYCKKCCFHCQVC) is cysteine-rich. K28 is modified (N6-acetyllysine; by host PCAF). C30, H33, C34, and C37 together coordinate Zn(2+). Positions 38 to 48 (FITKGLGISYG) are core. The segment covering 48-57 (GRKKRRQRRR) has biased composition (basic residues). Residues 48-101 (GRKKRRQRRRAPPDSEVHQVSLPKQPASQPQGDPTGPKESKKKVERETETDPVH) form a disordered region. The Nuclear localization signal, RNA-binding (TAR), and protein transduction motif lies at 49 to 57 (RKKRRQRRR). Residues 49–86 (RKKRRQRRRAPPDSEVHQVSLPKQPASQPQGDPTGPKE) are interaction with the host capping enzyme RNGTT. K50 and K51 each carry N6-acetyllysine; by host EP300 and GCN5L2. Asymmetric dimethylarginine; by host PRMT6 occurs at positions 52 and 53. K71 is covalently cross-linked (Glycyl lysine isopeptide (Lys-Gly) (interchain with G-Cter in ubiquitin)). The segment covering 83–101 (GPKESKKKVERETETDPVH) has biased composition (basic and acidic residues).

It belongs to the lentiviruses Tat family. Interacts with host CCNT1. Associates with the P-TEFb complex composed at least of Tat, P-TEFb (CDK9 and CCNT1), TAR RNA, RNA Pol II. Recruits the HATs CREBBP, TAF1/TFIID, EP300, PCAF and GCN5L2. Interacts with host KAT5/Tip60; this interaction targets the latter to degradation. Interacts with the host deacetylase SIRT1. Interacts with host capping enzyme RNGTT; this interaction stimulates RNGTT. Binds to host KDR, and to the host integrins ITGAV/ITGB3 and ITGA5/ITGB1. Interacts with host KPNB1/importin beta-1 without previous binding to KPNA1/importin alpha-1. Interacts with EIF2AK2. Interacts with host nucleosome assembly protein NAP1L1; this interaction may be required for the transport of Tat within the nucleus, since the two proteins interact at the nuclear rim. Interacts with host C1QBP/SF2P32; this interaction involves lysine-acetylated Tat. Interacts with the host chemokine receptors CCR2, CCR3 and CXCR4. Interacts with host DPP4/CD26; this interaction may trigger an anti-proliferative effect. Interacts with host LDLR. Interacts with the host extracellular matrix metalloproteinase MMP1. Interacts with host PRMT6; this interaction mediates Tat's methylation. Interacts with, and is ubiquitinated by MDM2/Hdm2. Interacts with host PSMC3 and HTATIP2. Interacts with STAB1; this interaction may overcome SATB1-mediated repression of IL2 and IL2RA (interleukin) in T cells by binding to the same domain than HDAC1. Interacts (when acetylated) with human CDK13, thereby increasing HIV-1 mRNA splicing and promoting the production of the doubly spliced HIV-1 protein Nef. Interacts with host TBP; this interaction modulates the activity of transcriptional pre-initiation complex. Interacts with host RELA. Interacts with host PLSCR1; this interaction negatively regulates Tat transactivation activity by altering its subcellular distribution. In terms of processing, asymmetrical arginine methylation by host PRMT6 seems to diminish the transactivation capacity of Tat and affects the interaction with host CCNT1. Post-translationally, acetylation by EP300, CREBBP, GCN5L2/GCN5 and PCAF regulates the transactivation activity of Tat. EP300-mediated acetylation of Lys-50 promotes dissociation of Tat from the TAR RNA through the competitive binding to PCAF's bromodomain. In addition, the non-acetylated Tat's N-terminus can also interact with PCAF. PCAF-mediated acetylation of Lys-28 enhances Tat's binding to CCNT1. Lys-50 is deacetylated by SIRT1. Polyubiquitination by host MDM2 does not target Tat to degradation, but activates its transactivation function and fosters interaction with CCNT1 and TAR RNA. In terms of processing, phosphorylated by EIF2AK2 on serine and threonine residues adjacent to the basic region important for TAR RNA binding and function. Phosphorylation of Tat by EIF2AK2 is dependent on the prior activation of EIF2AK2 by dsRNA.

It localises to the host nucleus. The protein localises to the host nucleolus. The protein resides in the host cytoplasm. Its subcellular location is the secreted. Its function is as follows. Transcriptional activator that increases RNA Pol II processivity, thereby increasing the level of full-length viral transcripts. Recognizes a hairpin structure at the 5'-LTR of the nascent viral mRNAs referred to as the transactivation responsive RNA element (TAR) and recruits the cyclin T1-CDK9 complex (P-TEFb complex) that will in turn hyperphosphorylate the RNA polymerase II to allow efficient elongation. The CDK9 component of P-TEFb and other Tat-activated kinases hyperphosphorylate the C-terminus of RNA Pol II that becomes stabilized and much more processive. Other factors such as HTATSF1/Tat-SF1, SUPT5H/SPT5, and HTATIP2 are also important for Tat's function. Besides its effect on RNA Pol II processivity, Tat induces chromatin remodeling of proviral genes by recruiting the histone acetyltransferases (HATs) CREBBP, EP300 and PCAF to the chromatin. This also contributes to the increase in proviral transcription rate, especially when the provirus integrates in transcriptionally silent region of the host genome. To ensure maximal activation of the LTR, Tat mediates nuclear translocation of NF-kappa-B by interacting with host RELA. Through its interaction with host TBP, Tat may also modulate transcription initiation. Tat can reactivate a latently infected cell by penetrating in it and transactivating its LTR promoter. In the cytoplasm, Tat is thought to act as a translational activator of HIV-1 mRNAs. In terms of biological role, extracellular circulating Tat can be endocytosed by surrounding uninfected cells via the binding to several surface receptors such as CD26, CXCR4, heparan sulfate proteoglycans (HSPG) or LDLR. Neurons are rarely infected, but they internalize Tat via their LDLR. Through its interaction with nuclear HATs, Tat is potentially able to control the acetylation-dependent cellular gene expression. Modulates the expression of many cellular genes involved in cell survival, proliferation or in coding for cytokines or cytokine receptors. Tat plays a role in T-cell and neurons apoptosis. Tat induced neurotoxicity and apoptosis probably contribute to neuroAIDS. Circulating Tat also acts as a chemokine-like and/or growth factor-like molecule that binds to specific receptors on the surface of the cells, affecting many cellular pathways. In the vascular system, Tat binds to ITGAV/ITGB3 and ITGA5/ITGB1 integrins dimers at the surface of endothelial cells and competes with bFGF for heparin-binding sites, leading to an excess of soluble bFGF. The protein is Protein Tat of Human immunodeficiency virus type 1 group M subtype B (isolate SF162) (HIV-1).